The chain runs to 836 residues: DNA gyrase subunit A (836 aa).

The Topo IIA-type catalytic domain maps to 46–510; it reads LPDARDGLKP…ISEEIDDESL (465 aa). Y134 acts as the O-(5'-phospho-DNA)-tyrosine intermediate in catalysis. A GyrA-box motif is present at residues 537-543; it reads QHRGGVG.

This sequence belongs to the type II topoisomerase GyrA/ParC subunit family. Heterotetramer, composed of two GyrA and two GyrB chains. In the heterotetramer, GyrA contains the active site tyrosine that forms a transient covalent intermediate with DNA, while GyrB binds cofactors and catalyzes ATP hydrolysis.

Its subcellular location is the cytoplasm. It catalyses the reaction ATP-dependent breakage, passage and rejoining of double-stranded DNA.. A type II topoisomerase that negatively supercoils closed circular double-stranded (ds) DNA in an ATP-dependent manner to modulate DNA topology and maintain chromosomes in an underwound state. Negative supercoiling favors strand separation, and DNA replication, transcription, recombination and repair, all of which involve strand separation. Also able to catalyze the interconversion of other topological isomers of dsDNA rings, including catenanes and knotted rings. Type II topoisomerases break and join 2 DNA strands simultaneously in an ATP-dependent manner. This is DNA gyrase subunit A from Mycoplasma genitalium (strain ATCC 33530 / DSM 19775 / NCTC 10195 / G37) (Mycoplasmoides genitalium).